The chain runs to 231 residues: 7-cyano-7-deazaguanine synthase (231 aa).

Phe-8–Leu-18 is an ATP binding site. Zn(2+) is bound by residues Cys-188, Cys-197, Cys-200, and Cys-203.

The protein belongs to the QueC family. The cofactor is Zn(2+).

It catalyses the reaction 7-carboxy-7-deazaguanine + NH4(+) + ATP = 7-cyano-7-deazaguanine + ADP + phosphate + H2O + H(+). It functions in the pathway purine metabolism; 7-cyano-7-deazaguanine biosynthesis. Functionally, catalyzes the ATP-dependent conversion of 7-carboxy-7-deazaguanine (CDG) to 7-cyano-7-deazaguanine (preQ(0)). This Salmonella agona (strain SL483) protein is 7-cyano-7-deazaguanine synthase.